The following is a 377-amino-acid chain: Molybdenum import ATP-binding protein ModC (377 aa).

Positions 4-240 (IAPRSIRGEF…PALPLATARD (237 aa)) constitute an ABC transporter domain. 38–45 (GPSGCGKS) lines the ATP pocket. A Mop domain is found at 299–369 (RTSILNILPA…IKGVALAPER (71 aa)).

It belongs to the ABC transporter superfamily. Molybdate importer (TC 3.A.1.8) family. In terms of assembly, the complex is composed of two ATP-binding proteins (ModC), two transmembrane proteins (ModB) and a solute-binding protein (ModA).

The protein resides in the cell inner membrane. The enzyme catalyses molybdate(out) + ATP + H2O = molybdate(in) + ADP + phosphate + H(+). Functionally, part of the ABC transporter complex ModABC involved in molybdenum import. Responsible for energy coupling to the transport system. This chain is Molybdenum import ATP-binding protein ModC, found in Rhodopseudomonas palustris (strain HaA2).